Reading from the N-terminus, the 154-residue chain is uncharacterized protein (154 aa).

S47 bears the Phosphoserine mark.

To yeast YPL229w.

This is an uncharacterized protein from Saccharomyces cerevisiae (strain ATCC 204508 / S288c) (Baker's yeast).